The sequence spans 303 residues: Sulfate adenylyltransferase subunit 2 (303 aa).

This sequence belongs to the PAPS reductase family. CysD subfamily. As to quaternary structure, heterodimer composed of CysD, the smaller subunit, and CysN.

The enzyme catalyses sulfate + ATP + H(+) = adenosine 5'-phosphosulfate + diphosphate. It functions in the pathway sulfur metabolism; hydrogen sulfide biosynthesis; sulfite from sulfate: step 1/3. In terms of biological role, with CysN forms the ATP sulfurylase (ATPS) that catalyzes the adenylation of sulfate producing adenosine 5'-phosphosulfate (APS) and diphosphate, the first enzymatic step in sulfur assimilation pathway. APS synthesis involves the formation of a high-energy phosphoric-sulfuric acid anhydride bond driven by GTP hydrolysis by CysN coupled to ATP hydrolysis by CysD. This Phocaeicola vulgatus (strain ATCC 8482 / DSM 1447 / JCM 5826 / CCUG 4940 / NBRC 14291 / NCTC 11154) (Bacteroides vulgatus) protein is Sulfate adenylyltransferase subunit 2.